The sequence spans 228 residues: Cytochrome c oxidase subunit 2 (228 aa).

The Mitochondrial intermembrane portion of the chain corresponds to M1 to S14. Residues P15–M45 form a helical membrane-spanning segment. Topologically, residues L46–Q58 are mitochondrial matrix. Residues E59 to M86 form a helical membrane-spanning segment. Topologically, residues D87–S228 are mitochondrial intermembrane. Residues H160, C195, E197, C199, H203, and M206 each contribute to the Cu cation site. E197 contacts Mg(2+).

It belongs to the cytochrome c oxidase subunit 2 family. Component of the cytochrome c oxidase (complex IV, CIV), a multisubunit enzyme composed of 14 subunits. The complex is composed of a catalytic core of 3 subunits MT-CO1, MT-CO2 and MT-CO3, encoded in the mitochondrial DNA, and 11 supernumerary subunits COX4I, COX5A, COX5B, COX6A, COX6B, COX6C, COX7A, COX7B, COX7C, COX8 and NDUFA4, which are encoded in the nuclear genome. The complex exists as a monomer or a dimer and forms supercomplexes (SCs) in the inner mitochondrial membrane with NADH-ubiquinone oxidoreductase (complex I, CI) and ubiquinol-cytochrome c oxidoreductase (cytochrome b-c1 complex, complex III, CIII), resulting in different assemblies (supercomplex SCI(1)III(2)IV(1) and megacomplex MCI(2)III(2)IV(2)). Found in a complex with TMEM177, COA6, COX18, COX20, SCO1 and SCO2. Interacts with TMEM177 in a COX20-dependent manner. Interacts with COX20. Interacts with COX16. Cu cation is required as a cofactor.

The protein localises to the mitochondrion inner membrane. The catalysed reaction is 4 Fe(II)-[cytochrome c] + O2 + 8 H(+)(in) = 4 Fe(III)-[cytochrome c] + 2 H2O + 4 H(+)(out). Functionally, component of the cytochrome c oxidase, the last enzyme in the mitochondrial electron transport chain which drives oxidative phosphorylation. The respiratory chain contains 3 multisubunit complexes succinate dehydrogenase (complex II, CII), ubiquinol-cytochrome c oxidoreductase (cytochrome b-c1 complex, complex III, CIII) and cytochrome c oxidase (complex IV, CIV), that cooperate to transfer electrons derived from NADH and succinate to molecular oxygen, creating an electrochemical gradient over the inner membrane that drives transmembrane transport and the ATP synthase. Cytochrome c oxidase is the component of the respiratory chain that catalyzes the reduction of oxygen to water. Electrons originating from reduced cytochrome c in the intermembrane space (IMS) are transferred via the dinuclear copper A center (CU(A)) of subunit 2 and heme A of subunit 1 to the active site in subunit 1, a binuclear center (BNC) formed by heme A3 and copper B (CU(B)). The BNC reduces molecular oxygen to 2 water molecules using 4 electrons from cytochrome c in the IMS and 4 protons from the mitochondrial matrix. In Anas platyrhynchos (Mallard), this protein is Cytochrome c oxidase subunit 2 (MT-CO2).